The following is a 296-amino-acid chain: Short-chain dehydrogenase/reductase ascJ (296 aa).

NADP(+) contacts are provided by Ile-28, Asp-66, and Asn-93. The active-site Proton donor is Ser-155. Residues Tyr-168, Lys-172, and Thr-205 each contribute to the NADP(+) site. The active-site Proton acceptor is Tyr-168. The active-site Lowers pKa of active site Tyr is Lys-172.

This sequence belongs to the short-chain dehydrogenases/reductases (SDR) family.

It catalyses the reaction ascofuranol + A = ascofuranone + AH2. The protein operates within secondary metabolite biosynthesis; terpenoid biosynthesis. Functionally, short-chain dehydrogenase/reductase; part of the asc-2 gene cluster that mediates the biosynthesis of ascofuranone, a strong inhibitor of cyanide-insensitive alternative oxidases and a promising drug candidate against African trypanosomiasis. The first step in the pathway is performed by the non-reducing polyketide synthase ascC that produces orsellinic acid by condensing acetyl-CoA with 3 malonyl-CoA units. Orsellinic acid is then prenylated by the prenyltransferase ascA to yield ilicicolinic acid B. Ilicicolinic acid B is further reduced to ilicicolin B by the reductase ascB. The halogenase ascD then chlorinates ilicicolin B to produce ilicicolin A which is converted to ilicicolin A epoxide by the cytochrome P450 monooxygenase ascE that catalyzes stereoselective epoxidation of the terminal double bond of the prenyl group. Ilicicolin A epoxide is the last common precursor for the biosynthesis of ascofuranone and ascochlorin. The terpene cyclase ascF produces a monocyclic terpene, and the cyclization reaction is proposed to be initiated by protonation of the terminal epoxide of ilicicolin A epoxide to generate a monocyclic tertiarycation, which is followed by a series of hydride and methyl shifts with abstraction of proton, leading to the formation of the (14S,15R,19R)-trimethylcyclohexanone ring structure of ilicicolin C, which is finally reduced to ascochlorin by the dehydrogenase ascG. On the other hand, ilicicolin A epoxide is hydroxylated by the cytochrome P450 monooxygenase ascH, and the resultant product is cyclized by the terpene cyclase ascI to ascofuranol via protonation-initiated epoxide ring opening, which facilitates the 6-endo-tet cyclization to form the tetrahy-drofuran ring. Finally, ascofuranol is oxidized into ascofuranone by ascJ. The protein is Short-chain dehydrogenase/reductase ascJ of Acremonium egyptiacum (Oospora egyptiaca).